A 423-amino-acid polypeptide reads, in one-letter code: Gamma-glutamyl phosphate reductase (423 aa).

This sequence belongs to the gamma-glutamyl phosphate reductase family.

The protein localises to the cytoplasm. The enzyme catalyses L-glutamate 5-semialdehyde + phosphate + NADP(+) = L-glutamyl 5-phosphate + NADPH + H(+). Its pathway is amino-acid biosynthesis; L-proline biosynthesis; L-glutamate 5-semialdehyde from L-glutamate: step 2/2. Its function is as follows. Catalyzes the NADPH-dependent reduction of L-glutamate 5-phosphate into L-glutamate 5-semialdehyde and phosphate. The product spontaneously undergoes cyclization to form 1-pyrroline-5-carboxylate. The chain is Gamma-glutamyl phosphate reductase from Burkholderia orbicola (strain MC0-3).